Here is a 206-residue protein sequence, read N- to C-terminus: Proteasome subunit beta 1 (206 aa).

Residues 1–5 (MLMKG) constitute a propeptide, removed in mature form; by autocatalysis. Thr6 (nucleophile) is an active-site residue.

This sequence belongs to the peptidase T1B family. As to quaternary structure, the 20S proteasome core is composed of 14 alpha and 14 beta subunits that assemble into four stacked heptameric rings, resulting in a barrel-shaped structure. The two inner rings, each composed of seven catalytic beta subunits, are sandwiched by two outer rings, each composed of seven alpha subunits. The catalytic chamber with the active sites is on the inside of the barrel. Has a gated structure, the ends of the cylinder being occluded by the N-termini of the alpha-subunits. Is capped at one or both ends by the proteasome regulatory ATPase, PAN.

The protein localises to the cytoplasm. The catalysed reaction is Cleavage of peptide bonds with very broad specificity.. Its activity is regulated as follows. The formation of the proteasomal ATPase PAN-20S proteasome complex, via the docking of the C-termini of PAN into the intersubunit pockets in the alpha-rings, triggers opening of the gate for substrate entry. Interconversion between the open-gate and close-gate conformations leads to a dynamic regulation of the 20S proteasome proteolysis activity. Functionally, component of the proteasome core, a large protease complex with broad specificity involved in protein degradation. This chain is Proteasome subunit beta 1, found in Korarchaeum cryptofilum (strain OPF8).